We begin with the raw amino-acid sequence, 96 residues long: Putative translation initiation factor IF-1, chloroplastic (96 aa).

The S1-like domain occupies 18–57; it reads INYVSGKIRHSFIRILPGDRVKIEVSPYDSTKGRIIYRLH.

Belongs to the IF-1 family. Component of the 30S ribosomal translation pre-initiation complex which assembles on the 30S ribosome in the order IF-2 and IF-3, IF-1 and N-formylmethionyl-tRNA(fMet); mRNA recruitment can occur at any time during PIC assembly.

Its subcellular location is the plastid. It localises to the chloroplast. In terms of biological role, one of the essential components for the initiation of protein synthesis. Stabilizes the binding of IF-2 and IF-3 on the 30S subunit to which N-formylmethionyl-tRNA(fMet) subsequently binds. Helps modulate mRNA selection, yielding the 30S pre-initiation complex (PIC). Upon addition of the 50S ribosomal subunit IF-1, IF-2 and IF-3 are released leaving the mature 70S translation initiation complex. The protein is Putative translation initiation factor IF-1, chloroplastic (infA) of Nicotiana tabacum (Common tobacco).